The primary structure comprises 294 residues: N-acetylmuramic acid 6-phosphate etherase (294 aa).

The SIS domain occupies 54-217 (TIHSFKSNGR…STASMIGVGK (164 aa)). The active-site Proton donor is the glutamate 82. Residue glutamate 113 is part of the active site.

The protein belongs to the GCKR-like family. MurNAc-6-P etherase subfamily. As to quaternary structure, homodimer.

It carries out the reaction N-acetyl-D-muramate 6-phosphate + H2O = N-acetyl-D-glucosamine 6-phosphate + (R)-lactate. It functions in the pathway amino-sugar metabolism; N-acetylmuramate degradation. Specifically catalyzes the cleavage of the D-lactyl ether substituent of MurNAc 6-phosphate, producing GlcNAc 6-phosphate and D-lactate. This Oceanobacillus iheyensis (strain DSM 14371 / CIP 107618 / JCM 11309 / KCTC 3954 / HTE831) protein is N-acetylmuramic acid 6-phosphate etherase.